A 953-amino-acid chain; its full sequence is Translation initiation factor IF-2 (953 aa).

Disordered regions lie at residues 48 to 248 and 279 to 363; these read SSFS…AELA and TKLK…TERK. 3 stretches are compositionally biased toward basic and acidic residues: residues 80 to 89, 98 to 111, and 140 to 188; these read TGSEHAEKTQ, FKAE…EQAA, and QGDK…ENHK. Over residues 191–207 the composition is skewed to polar residues; that stretch reads RFTNQKKQGRQEPQSKS. Positions 229-248 are enriched in basic and acidic residues; the sequence is RQSETRFRAQQEAKRLAELA. Over residues 282–291 the composition is skewed to polar residues; the sequence is KSSNISAKST. Over residues 300-317 the composition is skewed to basic and acidic residues; that stretch reads ARPEKNRELTHHSQEGQK. The segment covering 322–338 has biased composition (low complexity); it reads SWNSQNQVRNQKNSNWN. Positions 339 to 348 are enriched in basic residues; that stretch reads KNKKTKKGKN. In terms of domain architecture, tr-type G spans 454-623; it reads ERAPVVTIMG…LLVAEVEELK (170 aa). Residues 463–470 form a G1 region; it reads GHVDHGKT. 463-470 provides a ligand contact to GTP; sequence GHVDHGKT. The interval 488 to 492 is G2; that stretch reads GITQH. A G3 region spans residues 509 to 512; it reads DTPG. Residues 509–513 and 563–566 contribute to the GTP site; these read DTPGH and NKID. A G4 region spans residues 563–566; that stretch reads NKID. The tract at residues 599–601 is G5; sequence SAK.

The protein belongs to the TRAFAC class translation factor GTPase superfamily. Classic translation factor GTPase family. IF-2 subfamily.

Its subcellular location is the cytoplasm. Functionally, one of the essential components for the initiation of protein synthesis. Protects formylmethionyl-tRNA from spontaneous hydrolysis and promotes its binding to the 30S ribosomal subunits. Also involved in the hydrolysis of GTP during the formation of the 70S ribosomal complex. In Streptococcus pyogenes serotype M18 (strain MGAS8232), this protein is Translation initiation factor IF-2.